A 20-amino-acid chain; its full sequence is Phospholipase A2 homolog P-elapitoxin-Aa1a gamma chain (20 aa).

This sequence belongs to the phospholipase A2 family. Group I subfamily. Heterotrimer of alpha, beta and gamma chains, each related to PLA2. Post-translationally, glycosylated. Expressed by the venom gland.

Its subcellular location is the secreted. In terms of biological role, heterotrimer: Snake venom phospholipase A2 (PLA2) that has presynaptic neurotoxicity. Inhibits nerve-evoked twitch contractions but not responses to cholinergic agonists acetylcholine and carbachol and to depolarizing agonist KCl. Causes a fade in tetanic contractions. Displays a triphasic mode of action with depression, enhancement and blockade of neurotransmission. Does not display myotoxic activity such as changes in baseline muscle tension or inhibition of directly stimulated muscle twitches. All subunits are necessary for maximum toxicity. Its function is as follows. Monomer: the gamma chain has no significant enzymatic activity and is not toxic by itself. This Acanthophis antarcticus (Common death adder) protein is Phospholipase A2 homolog P-elapitoxin-Aa1a gamma chain.